Consider the following 172-residue polypeptide: Large ribosomal subunit protein uL10 (172 aa).

The protein belongs to the universal ribosomal protein uL10 family. In terms of assembly, part of the ribosomal stalk of the 50S ribosomal subunit. The N-terminus interacts with L11 and the large rRNA to form the base of the stalk. The C-terminus forms an elongated spine to which L12 dimers bind in a sequential fashion forming a multimeric L10(L12)X complex.

In terms of biological role, forms part of the ribosomal stalk, playing a central role in the interaction of the ribosome with GTP-bound translation factors. The polypeptide is Large ribosomal subunit protein uL10 (Francisella tularensis subsp. tularensis (strain FSC 198)).